The primary structure comprises 122 residues: Large ribosomal subunit protein uL14 (122 aa).

This sequence belongs to the universal ribosomal protein uL14 family. In terms of assembly, part of the 50S ribosomal subunit. Forms a cluster with proteins L3 and L19. In the 70S ribosome, L14 and L19 interact and together make contacts with the 16S rRNA in bridges B5 and B8.

Functionally, binds to 23S rRNA. Forms part of two intersubunit bridges in the 70S ribosome. This is Large ribosomal subunit protein uL14 from Bacillus licheniformis (strain ATCC 14580 / DSM 13 / JCM 2505 / CCUG 7422 / NBRC 12200 / NCIMB 9375 / NCTC 10341 / NRRL NRS-1264 / Gibson 46).